A 61-amino-acid polypeptide reads, in one-letter code: Tryptophyllin-1 (61 aa).

An N-terminal signal peptide occupies residues 1-22; that stretch reads MDILKKSLFLALFLGLVSISFC. The propeptide occupies 23–53; sequence DEEKRQDDDESNESEEKKEIHEEGSQEERRE. Residues 24 to 61 form a disordered region; sequence EEKRQDDDESNESEEKKEIHEEGSQEERREKPPPWVPV. A compositionally biased stretch (basic and acidic residues) spans 36 to 55; that stretch reads SEEKKEIHEEGSQEERREKP.

Expressed by the skin glands.

It localises to the secreted. In terms of biological role, the synthetic peptide inhibits bradykinin-induced relaxation of rat tail artery smooth muscle, and also has anti-proliferative effects on the human prostate cancer cell lines LNCaP, PC3 and DU145. The polypeptide is Tryptophyllin-1 (Phyllomedusa sauvagei (Sauvage's leaf frog)).